The primary structure comprises 427 residues: MSGVIVVGSQWGDEGKGKIVDFFAEHADAVVRYQGGNNAGHTIWHGNTKFELSALPSGILTEGQLAVIGNGVVVNPEALLAEIAEVQSQGIAIDNLRISNRAHVIMPYHIALDKAAESSTNNRIGTTKKGIGPAYTDKISRVGIRVADLVDPDVFAKLLKEYLPFKNAQLTKLYNEEALNYDDIYETYVEYGRQLAPYVTDTSYLLGQMIANKKRVVFEGAQGIMLDVDHGTYPYVTSSNPTAGGVMNGAGVGPKQIQDVVGVIKAYTSRVGEGPFPTELHDDIADHIREVGHEYGVVTKRPRRIGWLDAVALRHAVQVSGLTKLAINSLDVLTGLKTLKIATSYTYKGEEIHHFPASDTWFEGLDVNFETLPGWDEDITGVQSFDELPANAQNYLKRISDLLSVDLLSFAVGPKPEETHLLSDVWQ.

GTP-binding positions include 12-18 and 40-42; these read GDEGKGK and GHT. The active-site Proton acceptor is the D13. 2 residues coordinate Mg(2+): D13 and G40. IMP is bound by residues 13–16, 38–41, T127, R141, Q222, T237, and R301; these read DEGK and NAGH. H41 acts as the Proton donor in catalysis. 297 to 303 is a binding site for substrate; the sequence is VVTKRPR. Residues R303, 329 to 331, and 411 to 413 each bind GTP; these read SLD and AVG.

It belongs to the adenylosuccinate synthetase family. In terms of assembly, homodimer. Mg(2+) serves as cofactor.

The protein resides in the cytoplasm. The enzyme catalyses IMP + L-aspartate + GTP = N(6)-(1,2-dicarboxyethyl)-AMP + GDP + phosphate + 2 H(+). It participates in purine metabolism; AMP biosynthesis via de novo pathway; AMP from IMP: step 1/2. Plays an important role in the de novo pathway of purine nucleotide biosynthesis. Catalyzes the first committed step in the biosynthesis of AMP from IMP. The protein is Adenylosuccinate synthetase of Leuconostoc citreum (strain KM20).